The following is a 1806-amino-acid chain: SH3 and multiple ankyrin repeat domains protein 3 (1806 aa).

Residues 76–150 form an intramolecular interaction with the ANK repeats region; sequence MDGPGASAVV…KFLDEERLLQ (75 aa). Y197 carries the phosphotyrosine modification. ANK repeat units follow at residues 223–253, 257–286, 290–320, 324–353, 357–386, and 390–420; these read SGECPLSLAAQLDNATDLLKVLKNGGAHLDF, DGLTAVHCATRQRNAAALTTLLDLGASPDY, RGLTPLYHSALGGGDALCCELLLHDHAQLGI, NGWQEIHQACRFGHVQHLEHLLFYGADMGA, SGNTALHICALYNQESCARVLLFRGANRDV, and NSQTAFQVAIIAGNFELAEVIKTHKDSDVVP. The segment covering 407-416 has biased composition (basic and acidic residues); sequence AEVIKTHKDS. Residues 407-467 form a disordered region; that stretch reads AEVIKTHKDS…AQPAASPGPS (61 aa). Pro residues predominate over residues 439–461; it reads LASPRPLQRSASDINLKGEAQPA. Residues S448, S450, S463, S470, and S558 each carry the phosphoserine modification. Residues 546 to 605 form the SH3 domain; it reads VPGRKFIAVKAHSPQGEGEIPLHRGEAVKVLSIGEGGFWEGTVKGRTGWFPADCVEEVQM. Y631 bears the Phosphotyrosine mark. A PDZ domain is found at 646-740; sequence VAVLQKRDHE…RLVMKVVSVT (95 aa). 2 disordered regions span residues 665 to 689 and 760 to 853; these read KAETPIEEFTPTPAFPALQYLESVD and PSTT…KGIP. A required for interaction with ABI1 region spans residues 753 to 760; the sequence is PPPPKRAP. Position 770 is a phosphoserine (S770). Residues 813-845 show a composition bias toward pro residues; sequence ATVKQRPTSRRITPAEISSLFERQGLPGPEKLP. Residues S857, S866, and S877 each carry the phosphoserine modification. A disordered region spans residues 871–1021; it reads RFPRSTSMQD…FSASLFAPSK (151 aa). The span at 906-915 shows a compositional bias: pro residues; that stretch reads DSGPPPAFSP. Phosphoserine is present on residues S966 and S973. Phosphothreonine is present on T988. The segment covering 993-1013 has biased composition (gly residues); sequence PKRRPRPPGPDSPYANLGAFS. Position 1006 is a phosphotyrosine (Y1006). Position 1041 is an asymmetric dimethylarginine (R1041). Positions 1115–1124 are enriched in low complexity; that stretch reads PGADLPSLQP. 3 disordered regions span residues 1115–1460, 1475–1525, and 1546–1584; these read PGAD…MSTL, ADGH…HHAA, and SKLWGDPVESRGLPGPEDDKPTVISELSSRLQQLNKDTR. Positions 1173–1193 are enriched in basic and acidic residues; it reads TGKPLDPSSPLALALAARERA. Phosphothreonine is present on T1204. Residues S1208, S1233, S1237, and S1240 each carry the phosphoserine modification. Pro residues predominate over residues 1251 to 1261; the sequence is EAEKVPREERK. At T1309 the chain carries Phosphothreonine. Position 1328 is a phosphoserine (S1328). Residues 1360 to 1370 are compositionally biased toward basic and acidic residues; it reads LPPAQLSSSDE. Composition is skewed to low complexity over residues 1371–1392 and 1444–1460; these read ETREELARIGLVPPPEEFANGV and HLETTSTISTVSSMSTL. Residues 1485–1491 carry the SH3-binding motif; that stretch reads PPVPPKP. S1495 is subject to Phosphoserine. Over residues 1495–1505 the composition is skewed to polar residues; it reads SPLGKGPVTFR. Residues 1569–1589 are a coiled coil; that stretch reads ISELSSRLQQLNKDTRSLGEE. Phosphoserine is present on residues S1585, S1596, S1604, and S1614. Low complexity predominate over residues 1627–1637; that stretch reads PGGPGGGASYS. The segment at 1627–1664 is disordered; it reads PGGPGGGASYSVRPSGRYPVARRAPSPVKPASLERVEG. The span at 1638-1657 shows a compositional bias: pro residues; it reads VRPSGRYPVARRAPSPVKPA. Phosphoserine is present on residues S1709, S1711, and S1713. The 64-residue stretch at 1743-1806 folds into the SAM domain; the sequence is WSKFDVGDWL…ERALRQLDGS (64 aa).

In terms of assembly, may homomultimerize via its SAM domain. Interacts with BAIAP2, DBNL and SLC17A7/VGLUT1. Interacts with DLGAP1/GKAP, GRM1/MGLUR1, GRM5/MGLUR5 and LZTS3 C-termini via its PDZ domain. Interacts with ABI1, HOMER1, HOMER2, HOMER3 and CTTN/cortactin SH3 domain. Is part of a complex with DLG4/PSD-95 and DLGAP1/GKAP. Interacts (via PDZ domain) with the GRIA1 subunit of the AMPA receptor (via PDZ-binding motif). Interacts with WASF1 and CYFIP2; the interactions mediate the association of SHANK3 with the WAVE1 complex. Interacts with ARPC2; the interaction probably mediates the association of SHANK3 with the Arp2/3 complex. Interacts (via ANK repeats) with SHARPIN and SPTAN1. Interacts (via PDZ domain) with ARHGAP44 (probably via PDZ-binding motif); the interaction takes place in dendritic spines and promotes GRIA1 exocytosis. Interacts with CAMK2A. Interacts with DIP2A. Interacts with ADGRL3. Expressed in the cerebral cortex and the cerebellum.

Its subcellular location is the cytoplasm. The protein localises to the postsynaptic density. It is found in the cell projection. It localises to the dendritic spine. Its function is as follows. Major scaffold postsynaptic density protein which interacts with multiple proteins and complexes to orchestrate the dendritic spine and synapse formation, maturation and maintenance. Interconnects receptors of the postsynaptic membrane including NMDA-type and metabotropic glutamate receptors via complexes with GKAP/PSD-95 and HOMER, respectively, and the actin-based cytoskeleton. Plays a role in the structural and functional organization of the dendritic spine and synaptic junction through the interaction with Arp2/3 and WAVE1 complex as well as the promotion of the F-actin clusters. By way of this control of actin dynamics, participates in the regulation of developing neurons growth cone motility and the NMDA receptor-signaling. Also modulates GRIA1 exocytosis and GRM5/MGLUR5 expression and signaling to control the AMPA and metabotropic glutamate receptor-mediated synaptic transmission and plasticity. May be required at an early stage of synapse formation and be inhibited by IGF1 to promote synapse maturation. This Homo sapiens (Human) protein is SH3 and multiple ankyrin repeat domains protein 3 (SHANK3).